Consider the following 638-residue polypeptide: Intron-encoded RNA maturase bI4 (638 aa).

The interval 1-253 (MAFRKSNVYL…VFYSPNTLGQ (253 aa)) is COB exons 1 to 4 encoded. The interval 253–638 (QNMALLLITY…LKFNEKWNNN (386 aa)) is COB intron 4 encoded.

In the C-terminal section; belongs to the LAGLIDADG endonuclease family. In terms of assembly, forms a ternary complex with intron derived RNA and the imported mitochondrial leucyl-tRNA synthetase NAM2. The proteins do not interact directly with each other. Post-translationally, the mature protein may arise from proteolytic cleavage of an in-frame translation of COB exons 1 to 4 plus intron 4, containing the bI4 open reading frame. Cleavage would take place close to the Met-385 resulting in an active maturase of about 30 kDa.

The protein resides in the mitochondrion. Mitochondrial mRNA maturase required for splicing of intron 4 of the cytochrome b (COB) gene, containing its own coding sequence, and intron 4 in COX1, coding for the related homing endonuclease aI4. In vivo splicing requires in addition the imported mitochondrial leucyl-tRNA synthetase NAM2. Both proteins seem to stimulate the intrinsic ribozyme activity of intron bI4 through binding to and stabilizing specific secondary and tertiary structure elements in the RNA. This Saccharomyces cerevisiae (strain ATCC 204508 / S288c) (Baker's yeast) protein is Intron-encoded RNA maturase bI4 (BI4).